A 33-amino-acid polypeptide reads, in one-letter code: Dermaseptin DS VIII-like peptide (33 aa).

Residue alanine 33 is modified to Alanine amide.

In terms of tissue distribution, expressed by the parotoid glands.

The protein resides in the secreted. Functionally, possesses a potent antimicrobial activity against bacteria, fungi and protozoa. Probably acts by disturbing membrane functions with its amphipathic structure. In Phyllomedusa burmeisteri (Brazilian common walking leaf frog), this protein is Dermaseptin DS VIII-like peptide.